The chain runs to 283 residues: Movement protein (283 aa).

It belongs to the cucumovirus movement protein family.

It localises to the host cell junction. The protein resides in the host plasmodesma. Its function is as follows. Transports viral genome to neighboring plant cells directly through plasmosdesmata, without any budding. The movement protein allows efficient cell to cell propagation, by bypassing the host cell wall barrier. Acts by forming a tubular structure at the host plasmodesmata, enlarging it enough to allow free passage of virion capsids. This is Movement protein from Cucumis sativus (Cucumber).